We begin with the raw amino-acid sequence, 155 residues long: 3-hydroxyacyl-[acyl-carrier-protein] dehydratase FabZ (155 aa).

His-58 is a catalytic residue.

It belongs to the thioester dehydratase family. FabZ subfamily.

It is found in the cytoplasm. It carries out the reaction a (3R)-hydroxyacyl-[ACP] = a (2E)-enoyl-[ACP] + H2O. Involved in unsaturated fatty acids biosynthesis. Catalyzes the dehydration of short chain beta-hydroxyacyl-ACPs and long chain saturated and unsaturated beta-hydroxyacyl-ACPs. This chain is 3-hydroxyacyl-[acyl-carrier-protein] dehydratase FabZ, found in Rhizobium etli (strain ATCC 51251 / DSM 11541 / JCM 21823 / NBRC 15573 / CFN 42).